The primary structure comprises 421 residues: Gamma-glutamyl phosphate reductase (421 aa).

The protein belongs to the gamma-glutamyl phosphate reductase family.

The protein resides in the cytoplasm. It catalyses the reaction L-glutamate 5-semialdehyde + phosphate + NADP(+) = L-glutamyl 5-phosphate + NADPH + H(+). It functions in the pathway amino-acid biosynthesis; L-proline biosynthesis; L-glutamate 5-semialdehyde from L-glutamate: step 2/2. Its function is as follows. Catalyzes the NADPH-dependent reduction of L-glutamate 5-phosphate into L-glutamate 5-semialdehyde and phosphate. The product spontaneously undergoes cyclization to form 1-pyrroline-5-carboxylate. The polypeptide is Gamma-glutamyl phosphate reductase (Acinetobacter baumannii (strain ATCC 17978 / DSM 105126 / CIP 53.77 / LMG 1025 / NCDC KC755 / 5377)).